We begin with the raw amino-acid sequence, 416 residues long: Argininosuccinate synthase (416 aa).

Residues 11–19 and Ala37 each bind ATP; that span reads AYSGGLDTS. An L-citrulline-binding site is contributed by Tyr88. Phosphotyrosine occurs at positions 88 and 114. 116–124 contributes to the ATP binding site; it reads AHGATGKGN. L-aspartate contacts are provided by Thr120, Asn124, and Asp125. Asn124 provides a ligand contact to L-citrulline. L-citrulline is bound by residues Arg128, Ser181, Ser190, Glu271, and Tyr283. Phosphoserine is present on Ser181.

The protein belongs to the argininosuccinate synthase family. In terms of assembly, homotetramer.

The protein resides in the cytoplasm. The protein localises to the cytosol. It catalyses the reaction L-citrulline + L-aspartate + ATP = 2-(N(omega)-L-arginino)succinate + AMP + diphosphate + H(+). It participates in amino-acid biosynthesis; L-arginine biosynthesis; L-arginine from L-ornithine and carbamoyl phosphate: step 2/3. The protein operates within nitrogen metabolism; urea cycle; (N(omega)-L-arginino)succinate from L-aspartate and L-citrulline: step 1/1. In terms of biological role, one of the enzymes of the urea cycle, the metabolic pathway transforming neurotoxic amonia produced by protein catabolism into inocuous urea in the liver of ureotelic animals. Catalyzes the formation of arginosuccinate from aspartate, citrulline and ATP and together with ASL it is responsible for the biosynthesis of arginine in most body tissues. This chain is Argininosuccinate synthase, found in Gallus gallus (Chicken).